We begin with the raw amino-acid sequence, 212 residues long: Agglutinin isolectin 1 (212 aa).

The N-terminal stretch at 1–26 (MKMMSTRALALGAAAVLAFAAATAQA) is a signal peptide. At Q27 the chain carries Pyrrolidone carboxylic acid. Chitin-binding type-1 domains lie at 27–68 (QRCG…ACWT), 69–111 (SKRC…PCRA), 112–154 (DIKC…ACST), and 155–197 (DKPC…GCDG). Intrachain disulfides connect C29–C44, C38–C50, C43–C57, C61–C66, C72–C87, C81–C93, C86–C100, C104–C109, C115–C130, C124–C136, C129–C143, C147–C152, C158–C173, C167–C179, C172–C186, and C190–C195. 36-38 (MEC) is a substrate binding site. A substrate-binding site is contributed by 88 to 99 (SQYGYCGFGAEY). 140–141 (SE) provides a ligand contact to substrate. The propeptide occupies 198-212 (VFAEAITANSTLLQE).

Homodimer, u-shaped.

N-acetyl-D-glucosamine / N-acetyl-D-neuraminic acid binding lectin. In Triticum aestivum (Wheat), this protein is Agglutinin isolectin 1.